Reading from the N-terminus, the 145-residue chain is Protein FAM216B (145 aa).

The tract at residues 92–121 is disordered; sequence TKRASAKAGPHRTVPQRAAGRTRTQPSARP.

It belongs to the FAM216 family.

This Bos taurus (Bovine) protein is Protein FAM216B (FAM216B).